The sequence spans 579 residues: uncharacterized protein (579 aa).

The segment at 1–100 (MSGRRRNHPG…APPCGPYPGE (100 aa)) is disordered. Over residues 80-90 (GQQQSEPQHNS) the composition is skewed to polar residues. The next 11 helical transmembrane spans lie at 148-168 (FAVD…AAAS), 175-195 (VALY…LIGP), 206-226 (VALA…IMNY), 228-248 (GATG…MMVL), 279-299 (VFGL…VEFV), 303-323 (LFKL…GALL), 378-398 (LWGN…PAFV), 407-427 (WVQL…NFAG), 448-468 (IAVT…MTTI), 504-524 (SEST…MVYT), and 526-546 (LWVG…QTVV).

It to M.tuberculosis Rv0876c.

It localises to the cell membrane. This is an uncharacterized protein from Mycobacterium leprae (strain TN).